A 130-amino-acid chain; its full sequence is Small ribosomal subunit protein uS9 (130 aa).

Residues 109-130 (RKKERKKYGQRAARARFQYSKR) form a disordered region.

The protein belongs to the universal ribosomal protein uS9 family.

In Oleidesulfovibrio alaskensis (strain ATCC BAA-1058 / DSM 17464 / G20) (Desulfovibrio alaskensis), this protein is Small ribosomal subunit protein uS9.